A 312-amino-acid polypeptide reads, in one-letter code: DNA-directed RNA polymerase subunit alpha (312 aa).

The interval M1–T226 is alpha N-terminal domain (alpha-NTD). Residues K243–D312 form an alpha C-terminal domain (alpha-CTD) region.

Belongs to the RNA polymerase alpha chain family. As to quaternary structure, homodimer. The RNAP catalytic core consists of 2 alpha, 1 beta, 1 beta' and 1 omega subunit. When a sigma factor is associated with the core the holoenzyme is formed, which can initiate transcription.

The catalysed reaction is RNA(n) + a ribonucleoside 5'-triphosphate = RNA(n+1) + diphosphate. Functionally, DNA-dependent RNA polymerase catalyzes the transcription of DNA into RNA using the four ribonucleoside triphosphates as substrates. This chain is DNA-directed RNA polymerase subunit alpha, found in Lacticaseibacillus casei (strain BL23) (Lactobacillus casei).